The sequence spans 338 residues: F420-dependent glucose-6-phosphate dehydrogenase (338 aa).

Asp-40 contributes to the coenzyme F420-(gamma-Glu)n binding site. Residue His-41 is the Proton donor of the active site. Residues Thr-77 and Thr-108–Gly-109 contribute to the coenzyme F420-(gamma-Glu)n site. Glu-110 serves as the catalytic Proton acceptor. Residues Asn-113, Gly-178 to Gly-179, and Val-181 to Val-182 contribute to the coenzyme F420-(gamma-Glu)n site. Substrate contacts are provided by Thr-196, Lys-199, Lys-260, and Arg-284.

This sequence belongs to the F420-dependent glucose-6-phosphate dehydrogenase family. As to quaternary structure, homodimer.

It carries out the reaction oxidized coenzyme F420-(gamma-L-Glu)(n) + D-glucose 6-phosphate + H(+) = 6-phospho-D-glucono-1,5-lactone + reduced coenzyme F420-(gamma-L-Glu)(n). In terms of biological role, catalyzes the coenzyme F420-dependent oxidation of glucose 6-phosphate (G6P) to 6-phosphogluconolactone. The polypeptide is F420-dependent glucose-6-phosphate dehydrogenase (Gordonia bronchialis (strain ATCC 25592 / DSM 43247 / BCRC 13721 / JCM 3198 / KCTC 3076 / NBRC 16047 / NCTC 10667) (Rhodococcus bronchialis)).